The chain runs to 93 residues: Small ribosomal subunit protein uS19 (93 aa).

This sequence belongs to the universal ribosomal protein uS19 family.

Functionally, protein S19 forms a complex with S13 that binds strongly to the 16S ribosomal RNA. In Citrifermentans bemidjiense (strain ATCC BAA-1014 / DSM 16622 / JCM 12645 / Bem) (Geobacter bemidjiensis), this protein is Small ribosomal subunit protein uS19.